The chain runs to 353 residues: Ribosomal RNA small subunit methyltransferase H (353 aa).

S-adenosyl-L-methionine-binding positions include 49 to 51, Asp68, Phe95, Asp126, and Gln133; that span reads GGH.

It belongs to the methyltransferase superfamily. RsmH family.

It localises to the cytoplasm. The enzyme catalyses cytidine(1402) in 16S rRNA + S-adenosyl-L-methionine = N(4)-methylcytidine(1402) in 16S rRNA + S-adenosyl-L-homocysteine + H(+). Its function is as follows. Specifically methylates the N4 position of cytidine in position 1402 (C1402) of 16S rRNA. The sequence is that of Ribosomal RNA small subunit methyltransferase H from Corynebacterium urealyticum (strain ATCC 43042 / DSM 7109).